The primary structure comprises 373 residues: Carnosine N-methyltransferase (373 aa).

Residues Q110, R113, G154, E175, D242, F243, and C262 each contribute to the S-adenosyl-L-methionine site. D266 lines the carnosine pocket. Y274 serves as a coordination point for S-adenosyl-L-methionine. Carnosine is bound by residues H297 and Y356.

Belongs to the carnosine N-methyltransferase family.

The protein resides in the cytoplasm. It localises to the nucleus. It catalyses the reaction carnosine + S-adenosyl-L-methionine = anserine + S-adenosyl-L-homocysteine + H(+). In terms of biological role, N-methyltransferase that mediates the formation of anserine (beta-alanyl-N(Pi)-methyl-L-histidine) from carnosine. Also methylates other L-histidine-containing di- and tripeptides such as Gly-Gly-His, Gly-His and homocarnosine (GABA-His). The sequence is that of Carnosine N-methyltransferase from Schizosaccharomyces pombe (strain 972 / ATCC 24843) (Fission yeast).